Consider the following 423-residue polypeptide: 26S proteasome regulatory subunit 6A homolog B (423 aa).

Residue Ser-18 is modified to Phosphoserine. 211 to 218 (GPPGTGKT) lines the ATP pocket. Residues Lys-234, Lys-278, and Lys-415 each participate in a glycyl lysine isopeptide (Lys-Gly) (interchain with G-Cter in ubiquitin) cross-link.

The protein belongs to the AAA ATPase family. Component of the 19S regulatory particle (RP/PA700) base subcomplex of the 26S proteasome. The 26S proteasome is composed of a core protease (CP), known as the 20S proteasome, capped at one or both ends by the 19S regulatory particle (RP/PA700). The RP/PA700 complex is composed of at least 17 different subunits in two subcomplexes, the base and the lid, which form the portions proximal and distal to the 20S proteolytic core, respectively.

It localises to the cytoplasm. It is found in the nucleus. In terms of biological role, the 26S proteasome is involved in the ATP-dependent degradation of ubiquitinated proteins. The regulatory (or ATPase) complex confers ATP dependency and substrate specificity to the 26S complex. This chain is 26S proteasome regulatory subunit 6A homolog B (RPT5B), found in Arabidopsis thaliana (Mouse-ear cress).